The sequence spans 96 residues: Probable quinol oxidase subunit 4 (96 aa).

3 helical membrane passes run 8–28 (TVGF…TLYT), 37–57 (TIIF…FMHL), and 68–88 (FKVI…YWVM).

This sequence belongs to the cytochrome c oxidase bacterial subunit 4 family.

The protein localises to the cell membrane. The catalysed reaction is 2 a quinol + O2 = 2 a quinone + 2 H2O. Its function is as follows. Catalyzes quinol oxidation with the concomitant reduction of oxygen to water. In Staphylococcus haemolyticus (strain JCSC1435), this protein is Probable quinol oxidase subunit 4 (qoxD).